The following is a 205-amino-acid chain: Large ribosomal subunit protein uL3 (205 aa).

This sequence belongs to the universal ribosomal protein uL3 family. Part of the 50S ribosomal subunit. Forms a cluster with proteins L14 and L19.

Its function is as follows. One of the primary rRNA binding proteins, it binds directly near the 3'-end of the 23S rRNA, where it nucleates assembly of the 50S subunit. The protein is Large ribosomal subunit protein uL3 of Thermosipho africanus (strain TCF52B).